Reading from the N-terminus, the 510-residue chain is GTPase Der (510 aa).

EngA-type G domains are found at residues 4 to 168 (PVVA…AEKM) and 222 to 395 (IKIA…ACAT). GTP contacts are provided by residues 10 to 17 (GRPNVGKS), 57 to 61 (DTGGI), 120 to 123 (NKTD), 228 to 235 (GRPNVGKS), 275 to 279 (DTAGV), and 340 to 343 (NKWD). The region spanning 396-480 (QKMTTSMLTR…PIRLLFQEGN (85 aa)) is the KH-like domain.

The protein belongs to the TRAFAC class TrmE-Era-EngA-EngB-Septin-like GTPase superfamily. EngA (Der) GTPase family. As to quaternary structure, associates with the 50S ribosomal subunit.

In terms of biological role, GTPase that plays an essential role in the late steps of ribosome biogenesis. This is GTPase Der from Pasteurella multocida (strain Pm70).